The chain runs to 253 residues: uncharacterized protein (253 aa).

This sequence belongs to the MG439/MG440 family.

This is an uncharacterized protein from Mycoplasma pneumoniae (strain ATCC 29342 / M129 / Subtype 1) (Mycoplasmoides pneumoniae).